We begin with the raw amino-acid sequence, 473 residues long: Suppressor of SWI4 1 homolog (473 aa).

The Brix domain maps to 29-292; it reads PHSFVFTRGC…LIKVQEGVGE (264 aa). Ser238 and Ser240 each carry phosphoserine. The tract at residues 323-473 is disordered; that stretch reads AQRQAQQAQN…GRGRPRKRVA (151 aa). Positions 324 to 334 are enriched in low complexity; sequence QRQAQQAQNVQ. Over residues 335 to 360 the composition is skewed to basic and acidic residues; the sequence is RKQEQREAHRKKSLEGMKKARVRGGD. The segment covering 376–388 has biased composition (acidic residues); that stretch reads GEDDDEQEDDDIE. Positions 407–421 are enriched in basic residues; sequence KRKRLAKSPGQKRKR. Residues 422–444 are compositionally biased toward basic and acidic residues; it reads REMDRGRGRLCDQKFPKPKDKSH. Lys438 is modified (N6-acetyllysine). Positions 464–473 are enriched in basic residues; that stretch reads GRGRPRKRVA.

The protein resides in the nucleus. It localises to the nucleolus. Functionally, may have a role in cell growth. The chain is Suppressor of SWI4 1 homolog (PPAN) from Pongo abelii (Sumatran orangutan).